Consider the following 521-residue polypeptide: Manganese transporter pdt1 (521 aa).

Position 42 is a phosphoserine (Ser-42). Thr-43 is modified (phosphothreonine). Transmembrane regions (helical) follow at residues 71–91 (YCKFIGPGFLIAVAYIDPGNY), 104–124 (KLLFIVFLSNLFAVYLQSLCI), 152–172 (VLAEIAIIATDIAEVIGTAVA), 179–199 (IPLVAGVVITILDVLLVLIAW), 210–230 (IFETAVALLVLVVAISFAVVL), 233–253 (VHIGGAGTVFKGFLPSSTVFS), 260–280 (SIGILGATVMPHSLFLGSGLV), 325–345 (LFTFALFTNSSILIVAGAVFY), 373–393 (LFAVALLFSGMSAGYVCTIAG), 417–437 (IAIIPCLVVSAAVGQSGLNQV), 440–460 (ASQVCLSILLPFLTFPLVMFT), and 495–515 (IVTWAIWLFLTALNLLLIVWL).

It belongs to the NRAMP family.

The protein resides in the endoplasmic reticulum membrane. In terms of biological role, transports manganese ions into the cell. Regulates cell morphogenesis through control of manganese homeostasis. This Schizosaccharomyces pombe (strain 972 / ATCC 24843) (Fission yeast) protein is Manganese transporter pdt1 (pdt1).